A 139-amino-acid chain; its full sequence is Endoribonuclease YbeY (139 aa).

Residues His99, His103, and His109 each coordinate Zn(2+).

This sequence belongs to the endoribonuclease YbeY family. Requires Zn(2+) as cofactor.

It localises to the cytoplasm. Functionally, single strand-specific metallo-endoribonuclease involved in late-stage 70S ribosome quality control and in maturation of the 3' terminus of the 16S rRNA. The chain is Endoribonuclease YbeY from Nautilia profundicola (strain ATCC BAA-1463 / DSM 18972 / AmH).